We begin with the raw amino-acid sequence, 240 residues long: MRNVTRSHMVLHQIQSVLKKYEEVSAQELYESLDKGTVQREFGVRSVDLSRLSVSEEQFSELLLLFKLYSDQQQQSSIEFVATVPSEVDVRLRKTIAVIREMIHGAQNTILVTGYAVSEYVDEIMERVLEKALAGVNVDIFLDRNPQTDRYIENIRGRNLPSNFNVYVYKGSQGYSSLHAKVIMVDEEKAFVSSANLSYNGIVNNIEIGTLVGGEKILVIKNVLLELVKNNYFEKIIWYA.

Residues 174-201 (GYSSLHAKVIMVDEEKAFVSSANLSYNG) enclose the PLD phosphodiesterase domain. Catalysis depends on residues H179, K181, and D186.

It belongs to the phospholipase D family.

The protein localises to the cytoplasm. Its function is as follows. Component of antiviral defense system DISARM (defense island system associated with restriction-modification), composed of DrmE, DrmA, DrmB, DrmC and DrmMII. DISARM is probably a multi-gene restriction module, this subunit is probably a phospholipase or nuclease. Expression of DISARM in B.subtilis (strain BEST7003) confers resistance to phages Nf, phi29, phi105, phi3T, SPO1, SPR and SPP1. Protection is over 10(7)-fold against phi3T, 10(4)-10(5)-fold against Nf, phi29, phi105 and SPR, 100-fold against SPO1 and 10-fold against SPP1. DISARM does not interfere with phage adsorption, but instead interferes with (phi3T) DNA replication early in its cycle, preventing replication, circularization and lysogeny and probably causes phage DNA degradation (DNA is degraded in SPP1-infected cells). The polypeptide is DISARM protein DrmC (Bacillus paralicheniformis (strain ATCC 9945a / NCIMB 11709 / CD-2)).